A 1492-amino-acid polypeptide reads, in one-letter code: Copper-transporting ATPase 1 (1492 aa).

Residues 1-645 are Cytoplasmic-facing; it reads MEPNMDANSI…KREIKQWRGS (645 aa). HMA domains follow at residues 8–74 and 85–151; these read NSIT…FDAL and TNTV…LDMG. Positions 18, 19, and 22 each coordinate Cu(+). At Thr152 the chain carries Phosphothreonine. One can recognise an HMA 3 domain in the interval 171 to 237; that stretch reads VLLKMRVEGM…QIEAVGFPAF (67 aa). Cu(+) contacts are provided by Cys182 and Cys185. Ser270 is modified (phosphoserine). An HMA 4 domain is found at 277 to 343; sequence SAITFTIDGM…AIEAVSPGQY (67 aa). 2 residues coordinate Cu(+): Cys288 and Cys291. A Phosphothreonine modification is found at Thr327. Residues Ser339, Ser353, Ser357, and Ser362 each carry the phosphoserine modification. HMA domains are found at residues 377 to 443, 480 to 546, and 556 to 622; these read QEVV…FDAV, NKCY…FGAV, and GILE…FEAS. Residues Cys388, Cys391, Cys491, Cys494, Cys567, and Cys570 each coordinate Cu(+). A helical transmembrane segment spans residues 646 to 667; the sequence is FLVSLFFCIPVMGLMIYMMVMD. Residues 668-706 lie on the Extracellular side of the membrane; sequence HHLATLNHNQNMSNEEMINMHSSMFLERQILPGLSIMNL. The N-linked (GlcNAc...) asparagine glycan is linked to Asn678. A helical membrane pass occupies residues 707-726; sequence LSLLLCLPVQFCGGWYFYIQ. The Cytoplasmic segment spans residues 727 to 733; that stretch reads AYKALRH. A helical transmembrane segment spans residues 734 to 754; the sequence is KTANMDVLIVLATTIAFAYSL. Over 755–773 the chain is Extracellular; that stretch reads VILLVAMYERAKVNPITFF. Residues 774–794 form a helical membrane-spanning segment; that stretch reads DTPPMLFVFIALGRWLEHIAK. The Cytoplasmic portion of the chain corresponds to 795-927; it reads GKTSEALAKL…SKAPIQQFAD (133 aa). The chain crosses the membrane as a helical span at residues 928 to 951; it reads KLSGYFVPFIVLVSIVTLLVWIII. Residues 952 to 981 are Extracellular-facing; sequence GFQNFEIVEAYFPGYNRSISRTETIIRFAF. The helical transmembrane segment at 982–1003 threads the bilayer; that stretch reads QASITVLCIACPCSLGLATPTA. Residues 1004 to 1348 lie on the Cytoplasmic side of the membrane; it reads VMVGTGVGAQ…LSRKTVKRIR (345 aa). The 4-aspartylphosphate intermediate role is filled by Asp1036. Glu1073 is a binding site for ATP. At Thr1204 the chain carries Phosphothreonine. Mg(2+) is bound by residues Asp1293 and Asp1297. Residues 1349–1366 traverse the membrane as a helical segment; the sequence is INFVFALIYNLIGIPIAA. The Extracellular portion of the chain corresponds to 1367–1377; it reads GVFLPIGLVLQ. A helical membrane pass occupies residues 1378–1397; the sequence is PWMGSAAMAASSVSVVLSSL. Over 1398–1492 the chain is Cytoplasmic; that stretch reads FLKLYRKPTY…DFREDDDTTL (95 aa). A phosphoserine mark is found at Ser1422, Ser1424, Ser1452, Ser1455, and Ser1458. The Endocytosis signal motif lies at 1459–1460; that stretch reads LL. A phosphoserine mark is found at Ser1461, Ser1465, Ser1468, and Ser1478. The segment at 1478-1492 is PDZD11-binding; the sequence is SLLVGDFREDDDTTL. Residues 1479 to 1480 carry the Endocytosis signal motif; that stretch reads LL.

This sequence belongs to the cation transport ATPase (P-type) (TC 3.A.3) family. Type IB subfamily. In terms of assembly, monomer. Interacts with PDZD11. Interacts with ATOX1 and COMMD1. Interacts with TYRP1. Directly interacts with SOD3; this interaction is copper-dependent and is required for SOD3 activity. As to expression, expressed in hippocampal neuron (at protein level). Expressed in anterior pituitary gland (at protein level).

The protein resides in the golgi apparatus. It is found in the trans-Golgi network membrane. It localises to the cell membrane. The protein localises to the melanosome membrane. Its subcellular location is the early endosome membrane. The protein resides in the cell projection. It is found in the axon. It localises to the dendrite. The protein localises to the postsynaptic density. It catalyses the reaction Cu(+)(in) + ATP + H2O = Cu(+)(out) + ADP + phosphate + H(+). Functionally, ATP-driven copper (Cu(+)) ion pump that plays an important role in intracellular copper ion homeostasis. Within a catalytic cycle, acquires Cu(+) ion from donor protein on the cytoplasmic side of the membrane and delivers it to acceptor protein on the lumenal side. The transfer of Cu(+) ion across the membrane is coupled to ATP hydrolysis and is associated with a transient phosphorylation that shifts the pump conformation from inward-facing to outward-facing state. Under physiological conditions, at low cytosolic copper concentration, it is localized at the trans-Golgi network (TGN) where it transfers Cu(+) ions to cuproenzymes of the secretory pathway. Upon elevated cytosolic copper concentrations, it relocalizes to the plasma membrane where it is responsible for the export of excess Cu(+) ions. May play a dual role in neuron function and survival by regulating cooper efflux and neuronal transmission at the synapse as well as by supplying Cu(+) ions to enzymes such as PAM, TYR and SOD3. In the melanosomes of pigmented cells, provides copper cofactor to TYR to form an active TYR holoenzyme for melanin biosynthesis. The polypeptide is Copper-transporting ATPase 1 (Rattus norvegicus (Rat)).